A 690-amino-acid chain; its full sequence is Copper-exporting P-type ATPase B (690 aa).

Over 1-64 the chain is Cytoplasmic; the sequence is MHEHDSHGEA…MEDFKKRFYV (64 aa). Positions 23 to 46 are disordered; that stretch reads QHHEHHGHEEEHSAHHEKMKHSAD. Positions 28 to 46 are enriched in basic and acidic residues; the sequence is HGHEEEHSAHHEKMKHSAD. The helical transmembrane segment at 65–85 threads the bilayer; it reads STLLTIPILILSPAIQTFLGF. Over 86–91 the chain is Extracellular; that stretch reads RVEFAG. A helical transmembrane segment spans residues 92 to 112; it reads SLYILFLLSSAVYFYGGYPFL. The Cytoplasmic portion of the chain corresponds to 113–127; sequence KGIFDELRRRQPGMM. Residues 128 to 148 form a helical membrane-spanning segment; the sequence is TLIAVAISVAYFYSSAVVFGL. Residues 149-151 are Extracellular-facing; sequence KGK. Residues 152-172 traverse the membrane as a helical segment; sequence FFFWELATLIDIMLLGHYIEM. Over 173–303 the chain is Cytoplasmic; sequence RSVLGASRAL…KSRTQDLANR (131 aa). Residues 304-324 form a helical membrane-spanning segment; it reads AALLLTVIALTVGSVTLAIWL. Over 325 to 336 the chain is Extracellular; it reads AYIADFAFAIER. A helical membrane pass occupies residues 337–357; it reads AVTVMVITCPHALGLAIPLVV. Topologically, residues 358 to 640 are cytoplasmic; the sequence is AVSTSLAAKS…RKTYSKMKQN (283 aa). Residue D389 is the 4-aspartylphosphate intermediate of the active site. Residues 390-391, 537-538, and K565 contribute to the phosphate site; these read KT and TG. Mg(2+) is bound by residues D583 and D587. The helical transmembrane segment at 641-661 threads the bilayer; it reads LLWATGYNAFAIPLAAGVLYS. The Extracellular segment spans residues 662–663; it reads AG. A helical transmembrane segment spans residues 664–684; that stretch reads ILLSPAVGAILMSLSTVIVAI. Over 685–690 the chain is Cytoplasmic; the sequence is NARLLR.

Belongs to the cation transport ATPase (P-type) (TC 3.A.3) family. Type IB subfamily.

The protein localises to the cell membrane. It catalyses the reaction Cu(2+)(in) + ATP + H2O = Cu(2+)(out) + ADP + phosphate + H(+). With respect to regulation, activated by Cu(2+) and to a lesser extent by Ag(+) and Cu(+). In terms of biological role, involved in copper export. This Archaeoglobus fulgidus (strain ATCC 49558 / DSM 4304 / JCM 9628 / NBRC 100126 / VC-16) protein is Copper-exporting P-type ATPase B (copB).